The sequence spans 492 residues: Prostaglandin E2 receptor EP4 subtype (492 aa).

Residues 1 to 19 (MSIPGTNASSSQASNPLNS) lie on the Extracellular side of the membrane. Residue Asn-7 is glycosylated (N-linked (GlcNAc...) asparagine). The helical transmembrane segment at 20-43 (PVTIPAVMFIFGVVGNLVAIVVLC) threads the bilayer. Residues 44–55 (KSRKEQKETTFY) lie on the Cytoplasmic side of the membrane. A helical transmembrane segment spans residues 56-79 (TLVCGLAVTDLLGTLLVSPVTIAT). At 80 to 96 (YLKGQWPGGHALCEYST) the chain is on the extracellular side. Cysteines 92 and 170 form a disulfide. A helical transmembrane segment spans residues 97–115 (FILLFFGLSGLSIICAMSI). Residues 116–135 (ERYLAINHAYFYSHYVDKRL) lie on the Cytoplasmic side of the membrane. The chain crosses the membrane as a helical span at residues 136 to 160 (AGLTLFAVYASNVLFCALPSMGLGS). Topologically, residues 161-184 (SRLQYPATWCFIDWTTNVTAHAAF) are extracellular. A helical membrane pass occupies residues 185–211 (SYMYAGFSSFLILATVLCNVLVCGALL). The Cytoplasmic portion of the chain corresponds to 212–273 (RMHRQFMRRT…RSFRRIAGAE (62 aa)). The helical transmembrane segment at 274 to 301 (IQMVILLIATSLVVLICSIPLVVRVFVN) threads the bilayer. The Extracellular portion of the chain corresponds to 302-318 (QLYRPQLEPVIGKNPDL). A helical transmembrane segment spans residues 319–338 (QAIRIASVSPILDPWIYILL). Residues 339–492 (RKTVLSKAIE…ETLNLSEKCI (154 aa)) lie on the Cytoplasmic side of the membrane. Residues 361–374 (RRERSGPHCSDSRR) show a composition bias toward basic and acidic residues. Positions 361–383 (RRERSGPHCSDSRRTSSAVSGHS) are disordered. Phosphoserine is present on residues Ser-380, Ser-383, Ser-385, and Ser-388.

This sequence belongs to the G-protein coupled receptor 1 family. In terms of assembly, interacts with FEM1A. In terms of processing, phosphorylation mediates agonist-mediated desensitization by promoting cytoplasmic retention.

The protein localises to the cell membrane. In terms of biological role, receptor for prostaglandin E2 (PGE2). The activity of this receptor is mediated by G(s) proteins that stimulate adenylate cyclase. Has a relaxing effect on smooth muscle. May play an important role in regulating renal hemodynamics, intestinal epithelial transport, adrenal aldosterone secretion, and uterine function. This chain is Prostaglandin E2 receptor EP4 subtype (PTGER4), found in Bos taurus (Bovine).